Consider the following 317-residue polypeptide: Cyclin-T1-3 (317 aa).

The protein belongs to the cyclin family. Cyclin T subfamily. Interacts with CDKC-1 and CDKC-2. In terms of tissue distribution, abundantly expressed in flowers. Expressed in roots, seedlings, rosettes and stems.

This chain is Cyclin-T1-3 (CYCT1-3), found in Arabidopsis thaliana (Mouse-ear cress).